The chain runs to 396 residues: Tryptophan synthase beta chain (396 aa).

Lys-88 carries the N6-(pyridoxal phosphate)lysine modification.

This sequence belongs to the TrpB family. In terms of assembly, tetramer of two alpha and two beta chains. Pyridoxal 5'-phosphate serves as cofactor.

It carries out the reaction (1S,2R)-1-C-(indol-3-yl)glycerol 3-phosphate + L-serine = D-glyceraldehyde 3-phosphate + L-tryptophan + H2O. It participates in amino-acid biosynthesis; L-tryptophan biosynthesis; L-tryptophan from chorismate: step 5/5. In terms of biological role, the beta subunit is responsible for the synthesis of L-tryptophan from indole and L-serine. The chain is Tryptophan synthase beta chain from Shewanella baltica (strain OS155 / ATCC BAA-1091).